The primary structure comprises 58 residues: MTQVTVGENEGIESALRRFKRQVSKAGIFGELKRLRHHETPVEKYKRKLQQRRRSRRR.

Residues 36 to 58 form a disordered region; that stretch reads RHHETPVEKYKRKLQQRRRSRRR. Over residues 45–58 the composition is skewed to basic residues; the sequence is YKRKLQQRRRSRRR.

The protein belongs to the bacterial ribosomal protein bS21 family.

The protein is Small ribosomal subunit protein bS21 of Prochlorococcus marinus (strain NATL1A).